Reading from the N-terminus, the 165-residue chain is NADPH-dependent 7-cyano-7-deazaguanine reductase (165 aa).

C56 functions as the Thioimide intermediate in the catalytic mechanism. Catalysis depends on D63, which acts as the Proton donor. Substrate is bound by residues 78-80 (VES) and 97-98 (HE).

Belongs to the GTP cyclohydrolase I family. QueF type 1 subfamily.

It localises to the cytoplasm. It catalyses the reaction 7-aminomethyl-7-carbaguanine + 2 NADP(+) = 7-cyano-7-deazaguanine + 2 NADPH + 3 H(+). The protein operates within tRNA modification; tRNA-queuosine biosynthesis. Functionally, catalyzes the NADPH-dependent reduction of 7-cyano-7-deazaguanine (preQ0) to 7-aminomethyl-7-deazaguanine (preQ1). This chain is NADPH-dependent 7-cyano-7-deazaguanine reductase, found in Bacillus pumilus (strain SAFR-032).